A 74-amino-acid chain; its full sequence is Large ribosomal subunit protein bL31 (74 aa).

Residues Cys-16, Cys-18, Cys-38, and Cys-41 each contribute to the Zn(2+) site.

The protein belongs to the bacterial ribosomal protein bL31 family. Type A subfamily. In terms of assembly, part of the 50S ribosomal subunit. Zn(2+) is required as a cofactor.

Functionally, binds the 23S rRNA. The protein is Large ribosomal subunit protein bL31 of Acinetobacter baylyi (strain ATCC 33305 / BD413 / ADP1).